Consider the following 433-residue polypeptide: Keratin, type I cytoskeletal 47 kDa (433 aa).

The segment at 1-73 is head; sequence MSYSTRSISQ…AFNVSVTSNN (73 aa). The segment at 74-109 is coil 1A; it reads GKETMQNLNDRLANYLDRVRSLEQANHELELKIREY. Positions 74 to 385 constitute an IF rod domain; the sequence is GKETMQNLND…RLLEGEDTRF (312 aa). The interval 110-127 is linker 1; sequence LDKKAAVGSLDYSGYYNT. The interval 128–219 is coil 1B; sequence INLLRSQIND…KNHEEELAVV (92 aa). The interval 220–242 is linker 12; the sequence is RSSARGNVDVQVDSAPPVDLAQI. Residues 243-381 are coil 2; it reads MADVRSQYES…ATYRRLLEGE (139 aa). The tail stretch occupies residues 382 to 433; that stretch reads DTRFSQTETQKAVTIVSKEQSSSSIKKVKTVIEEVVDGKVVSSRVEELTETS.

The protein belongs to the intermediate filament family. As to quaternary structure, heterotetramer of two type I and two type II keratins.

The protein is Keratin, type I cytoskeletal 47 kDa (xk70a) of Xenopus laevis (African clawed frog).